A 259-amino-acid polypeptide reads, in one-letter code: DNA-directed RNA polymerase 30 kDa polypeptide (259 aa).

Residues 155 to 195 form a TFIIS-type zinc finger; it reads YNTPCPNCKSRNTTPMMIQTRAADEPPLVRHACRDCKQHFK. Zn(2+)-binding residues include cysteine 159, cysteine 162, cysteine 187, and cysteine 190. Residues 214 to 259 are disordered; that stretch reads ENKEITEILPDNNPSPPESPEPASPIDDGLIRSTFDRNDEPPEDDE. A compositionally biased stretch (pro residues) spans 226-236; sequence NPSPPESPEPA.

Belongs to the poxviridae DNA-directed RNA polymerase 30 kDa subunit family. In terms of assembly, the DNA-dependent RNA polymerase (vRNAP) consists of eight subunits encoded by early viral genes and termed according to their apparent molecular masses Rpo147, Rpo132, Rpo35, Rpo30, Rpo22, Rpo19, Rpo18, and Rpo7. The same holoenzyme, with the addition of the transcription-specificity factor RAP94, is used for early gene expression.

It is found in the virion. The protein resides in the host cytoplasm. The catalysed reaction is RNA(n) + a ribonucleoside 5'-triphosphate = RNA(n+1) + diphosphate. Its function is as follows. Part of the DNA-dependent RNA polymerase which catalyzes the transcription of viral DNA into RNA using the four ribonucleoside triphosphates as substrates. Responsible for the transcription of early, intermediate and late genes. DNA-dependent RNA polymerase associates with the early transcription factor (ETF), itself composed of OPG118/D6 and OPG134/A8, thereby allowing the early genes transcription. Late transcription, and probably also intermediate transcription, require newly synthesized RNA polymerase. The polypeptide is DNA-directed RNA polymerase 30 kDa polypeptide (OPG066) (Homo sapiens (Human)).